Consider the following 292-residue polypeptide: Ribosomal protein L11 methyltransferase (292 aa).

Residues T136, G159, D181, and N228 each coordinate S-adenosyl-L-methionine.

It belongs to the methyltransferase superfamily. PrmA family.

Its subcellular location is the cytoplasm. It carries out the reaction L-lysyl-[protein] + 3 S-adenosyl-L-methionine = N(6),N(6),N(6)-trimethyl-L-lysyl-[protein] + 3 S-adenosyl-L-homocysteine + 3 H(+). In terms of biological role, methylates ribosomal protein L11. The protein is Ribosomal protein L11 methyltransferase of Rhizobium etli (strain CIAT 652).